The chain runs to 394 residues: Actin-related protein 2-B (394 aa).

Residues 160 to 162, 214 to 218, and 305 to 310 contribute to the ATP site; these read GDG, RMMKE, and GGSTMY.

This sequence belongs to the actin family. ARP2 subfamily. Component of the Arp2/3 complex composed of actr2/arp2, actr3/arp3, arpc1b, arpc2, arpc3, arpc4 and arpc5.

It is found in the cytoplasm. Its subcellular location is the cytoskeleton. The protein localises to the cell projection. It localises to the nucleus. In terms of biological role, ATP-binding component of the Arp2/3 complex, a multiprotein complex that mediates actin polymerization upon stimulation by nucleation-promoting factor (NPF). The Arp2/3 complex mediates the formation of branched actin networks in the cytoplasm, providing the force for cell motility. Seems to contact the pointed end of the daughter actin filament. In addition to its role in the cytoplasmic cytoskeleton, the Arp2/3 complex also promotes actin polymerization in the nucleus, thereby regulating gene transcription and repair of damaged DNA. The Arp2/3 complex promotes homologous recombination (HR) repair in response to DNA damage by promoting nuclear actin polymerization, leading to drive motility of double-strand breaks (DSBs). The protein is Actin-related protein 2-B (actr2b) of Danio rerio (Zebrafish).